The chain runs to 69 residues: Neurotoxin Cex7 (69 aa).

A1 is a signal peptide. The LCN-type CS-alpha/beta domain maps to 2 to 67 (REGYLVSKST…TYPIPGKSCG (66 aa)). 4 disulfide bridges follow: C13-C66, C17-C42, C26-C47, and C30-C49. Cysteine amide is present on C66. The propeptide occupies 67–69 (GKK).

Belongs to the long (4 C-C) scorpion toxin superfamily. Sodium channel inhibitor family. Beta subfamily. In terms of tissue distribution, expressed by the venom gland.

It is found in the secreted. Functionally, beta toxins bind voltage-independently at site-4 of sodium channels (Nav) and shift the voltage of activation toward more negative potentials thereby affecting sodium channel activation and promoting spontaneous and repetitive firing. The chain is Neurotoxin Cex7 from Centruroides exilicauda (Bark scorpion).